We begin with the raw amino-acid sequence, 241 residues long: 1-(5-phosphoribosyl)-5-[(5-phosphoribosylamino)methylideneamino] imidazole-4-carboxamide isomerase (241 aa).

Aspartate 12 (proton acceptor) is an active-site residue. Aspartate 133 (proton donor) is an active-site residue.

It belongs to the HisA/HisF family.

Its subcellular location is the cytoplasm. It carries out the reaction 1-(5-phospho-beta-D-ribosyl)-5-[(5-phospho-beta-D-ribosylamino)methylideneamino]imidazole-4-carboxamide = 5-[(5-phospho-1-deoxy-D-ribulos-1-ylimino)methylamino]-1-(5-phospho-beta-D-ribosyl)imidazole-4-carboxamide. It participates in amino-acid biosynthesis; L-histidine biosynthesis; L-histidine from 5-phospho-alpha-D-ribose 1-diphosphate: step 4/9. This Persephonella marina (strain DSM 14350 / EX-H1) protein is 1-(5-phosphoribosyl)-5-[(5-phosphoribosylamino)methylideneamino] imidazole-4-carboxamide isomerase.